The chain runs to 101 residues: Small ribosomal subunit protein uS14 (101 aa).

It belongs to the universal ribosomal protein uS14 family. In terms of assembly, part of the 30S ribosomal subunit. Contacts proteins S3 and S10.

Binds 16S rRNA, required for the assembly of 30S particles and may also be responsible for determining the conformation of the 16S rRNA at the A site. This is Small ribosomal subunit protein uS14 from Salmonella paratyphi A (strain ATCC 9150 / SARB42).